The primary structure comprises 204 residues: GTP cyclohydrolase-2 (204 aa).

49–53 provides a ligand contact to GTP; it reads RIHSE. Zn(2+) is bound by residues Cys54, Cys65, and Cys67. Residues Gln70, 92–94, and Thr114 each bind GTP; that span reads EGR. Asp126 functions as the Proton acceptor in the catalytic mechanism. Arg128 (nucleophile) is an active-site residue. The GTP site is built by Thr149 and Lys154.

It belongs to the GTP cyclohydrolase II family. Zn(2+) is required as a cofactor.

The catalysed reaction is GTP + 4 H2O = 2,5-diamino-6-hydroxy-4-(5-phosphoribosylamino)-pyrimidine + formate + 2 phosphate + 3 H(+). It participates in cofactor biosynthesis; riboflavin biosynthesis; 5-amino-6-(D-ribitylamino)uracil from GTP: step 1/4. Its function is as follows. Catalyzes the conversion of GTP to 2,5-diamino-6-ribosylamino-4(3H)-pyrimidinone 5'-phosphate (DARP), formate and pyrophosphate. This is GTP cyclohydrolase-2 from Shewanella baltica (strain OS155 / ATCC BAA-1091).